Reading from the N-terminus, the 418-residue chain is Serine hydroxymethyltransferase (418 aa).

(6S)-5,6,7,8-tetrahydrofolate-binding positions include Leu121 and 125–127 (GHL). An N6-(pyridoxal phosphate)lysine modification is found at Lys230. 356-358 (SPF) is a (6S)-5,6,7,8-tetrahydrofolate binding site.

Belongs to the SHMT family. As to quaternary structure, homodimer. The cofactor is pyridoxal 5'-phosphate.

It localises to the cytoplasm. The enzyme catalyses (6R)-5,10-methylene-5,6,7,8-tetrahydrofolate + glycine + H2O = (6S)-5,6,7,8-tetrahydrofolate + L-serine. It functions in the pathway one-carbon metabolism; tetrahydrofolate interconversion. It participates in amino-acid biosynthesis; glycine biosynthesis; glycine from L-serine: step 1/1. Its function is as follows. Catalyzes the reversible interconversion of serine and glycine with tetrahydrofolate (THF) serving as the one-carbon carrier. This reaction serves as the major source of one-carbon groups required for the biosynthesis of purines, thymidylate, methionine, and other important biomolecules. Also exhibits THF-independent aldolase activity toward beta-hydroxyamino acids, producing glycine and aldehydes, via a retro-aldol mechanism. The sequence is that of Serine hydroxymethyltransferase from Shewanella woodyi (strain ATCC 51908 / MS32).